A 280-amino-acid chain; its full sequence is Energy-coupling factor transporter ATP-binding protein EcfA2 (280 aa).

The ABC transporter domain maps to Ile3 to Gly245. Gly40–Ser47 lines the ATP pocket.

The protein belongs to the ABC transporter superfamily. Energy-coupling factor EcfA family. Forms a stable energy-coupling factor (ECF) transporter complex composed of 2 membrane-embedded substrate-binding proteins (S component), 2 ATP-binding proteins (A component) and 2 transmembrane proteins (T component).

The protein resides in the cell membrane. Functionally, ATP-binding (A) component of a common energy-coupling factor (ECF) ABC-transporter complex. Unlike classic ABC transporters this ECF transporter provides the energy necessary to transport a number of different substrates. This chain is Energy-coupling factor transporter ATP-binding protein EcfA2, found in Streptococcus thermophilus (strain CNRZ 1066).